The primary structure comprises 295 residues: ESX-3 secretion-associated protein EspG3 (295 aa).

It belongs to the EspG family. As to quaternary structure, interacts specifically with ESX-3-dependent PE/PPE proteins.

Its subcellular location is the cytoplasm. Its function is as follows. Specific chaperone for cognate PE/PPE proteins. Plays an important role in preventing aggregation of PE/PPE dimers. This Mycobacterium tuberculosis (strain CDC 1551 / Oshkosh) protein is ESX-3 secretion-associated protein EspG3.